A 505-amino-acid chain; its full sequence is ATP synthase subunit alpha, chloroplastic (505 aa).

170–177 (GDRQTGKT) contributes to the ATP binding site.

The protein belongs to the ATPase alpha/beta chains family. In terms of assembly, F-type ATPases have 2 components, CF(1) - the catalytic core - and CF(0) - the membrane proton channel. CF(1) has five subunits: alpha(3), beta(3), gamma(1), delta(1), epsilon(1). CF(0) has four main subunits: a, b, b' and c.

It localises to the plastid. The protein resides in the chloroplast thylakoid membrane. It catalyses the reaction ATP + H2O + 4 H(+)(in) = ADP + phosphate + 5 H(+)(out). Its function is as follows. Produces ATP from ADP in the presence of a proton gradient across the membrane. The alpha chain is a regulatory subunit. The sequence is that of ATP synthase subunit alpha, chloroplastic from Mesostigma viride (Green alga).